We begin with the raw amino-acid sequence, 341 residues long: Glycerol-3-phosphate dehydrogenase [NAD(P)+] (341 aa).

Positions 11, 12, 32, and 106 each coordinate NADPH. Sn-glycerol 3-phosphate contacts are provided by Lys-106, Gly-137, and Thr-139. Residue Ala-141 coordinates NADPH. The sn-glycerol 3-phosphate site is built by Lys-192, Asp-245, Ser-255, Arg-256, and Asn-257. Lys-192 serves as the catalytic Proton acceptor. Arg-256 serves as a coordination point for NADPH. 2 residues coordinate NADPH: Val-280 and Glu-282.

This sequence belongs to the NAD-dependent glycerol-3-phosphate dehydrogenase family.

The protein localises to the cytoplasm. It catalyses the reaction sn-glycerol 3-phosphate + NAD(+) = dihydroxyacetone phosphate + NADH + H(+). The enzyme catalyses sn-glycerol 3-phosphate + NADP(+) = dihydroxyacetone phosphate + NADPH + H(+). It participates in membrane lipid metabolism; glycerophospholipid metabolism. In terms of biological role, catalyzes the reduction of the glycolytic intermediate dihydroxyacetone phosphate (DHAP) to sn-glycerol 3-phosphate (G3P), the key precursor for phospholipid synthesis. The chain is Glycerol-3-phosphate dehydrogenase [NAD(P)+] from Exiguobacterium sp. (strain ATCC BAA-1283 / AT1b).